The primary structure comprises 311 residues: Malate dehydrogenase (311 aa).

Residues 7–13 (GAAGGIG) and Asp-34 each bind NAD(+). 2 residues coordinate substrate: Arg-81 and Arg-87. Residues Asn-94 and 117-119 (ITN) contribute to the NAD(+) site. Substrate contacts are provided by Asn-119 and Arg-153. His-177 functions as the Proton acceptor in the catalytic mechanism. An NAD(+)-binding site is contributed by Met-227.

It belongs to the LDH/MDH superfamily. MDH type 1 family. Homodimer.

It carries out the reaction (S)-malate + NAD(+) = oxaloacetate + NADH + H(+). Its function is as follows. Catalyzes the reversible oxidation of malate to oxaloacetate. This is Malate dehydrogenase from Shewanella putrefaciens (strain CN-32 / ATCC BAA-453).